Here is a 465-residue protein sequence, read N- to C-terminus: Cysteine--tRNA ligase (465 aa).

Residue cysteine 27 coordinates Zn(2+). The short motif at 29-39 (PTVYDDAHLGH) is the 'HIGH' region element. The Zn(2+) site is built by cysteine 207, histidine 237, and glutamate 241. The short motif at 269–273 (KMSKS) is the 'KMSKS' region element. Lysine 272 is an ATP binding site.

Belongs to the class-I aminoacyl-tRNA synthetase family. Monomer. Requires Zn(2+) as cofactor.

It localises to the cytoplasm. It carries out the reaction tRNA(Cys) + L-cysteine + ATP = L-cysteinyl-tRNA(Cys) + AMP + diphosphate. The protein is Cysteine--tRNA ligase of Helicobacter acinonychis (strain Sheeba).